A 700-amino-acid chain; its full sequence is Transketolase (700 aa).

A substrate-binding site is contributed by His-45. Thiamine diphosphate is bound by residues Thr-48, His-85, and 133–135 (GPL). Asp-177 serves as a coordination point for Mg(2+). Positions 178 and 207 each coordinate thiamine diphosphate. Asn-207 and Ile-209 together coordinate Mg(2+). Residues His-283, Arg-378, and Ser-405 each coordinate substrate. His-283 provides a ligand contact to thiamine diphosphate. The Proton donor role is filled by Glu-441. Thiamine diphosphate is bound at residue Phe-467. 3 residues coordinate substrate: His-491, Asp-499, and Arg-552.

The protein belongs to the transketolase family. As to quaternary structure, homodimer. It depends on Mg(2+) as a cofactor. Requires Ca(2+) as cofactor. The cofactor is Mn(2+). Co(2+) is required as a cofactor. Thiamine diphosphate serves as cofactor.

It carries out the reaction D-sedoheptulose 7-phosphate + D-glyceraldehyde 3-phosphate = aldehydo-D-ribose 5-phosphate + D-xylulose 5-phosphate. Its function is as follows. Catalyzes the transfer of a two-carbon ketol group from a ketose donor to an aldose acceptor, via a covalent intermediate with the cofactor thiamine pyrophosphate. In Mycobacterium bovis (strain ATCC BAA-935 / AF2122/97), this protein is Transketolase (tkt).